Reading from the N-terminus, the 164-residue chain is Phosphopantetheine adenylyltransferase (164 aa).

Ser9 serves as a coordination point for substrate. ATP-binding positions include 9-10 (SF) and His17. The substrate site is built by Lys41, Leu73, and Lys87. ATP contacts are provided by residues 88 to 90 (GLR), Glu98, and 123 to 129 (HSFLSSS).

It belongs to the bacterial CoaD family. As to quaternary structure, homohexamer. Mg(2+) serves as cofactor.

It is found in the cytoplasm. It catalyses the reaction (R)-4'-phosphopantetheine + ATP + H(+) = 3'-dephospho-CoA + diphosphate. It functions in the pathway cofactor biosynthesis; coenzyme A biosynthesis; CoA from (R)-pantothenate: step 4/5. In terms of biological role, reversibly transfers an adenylyl group from ATP to 4'-phosphopantetheine, yielding dephospho-CoA (dPCoA) and pyrophosphate. The sequence is that of Phosphopantetheine adenylyltransferase from Rubrobacter xylanophilus (strain DSM 9941 / JCM 11954 / NBRC 16129 / PRD-1).